Reading from the N-terminus, the 1374-residue chain is DNA-directed RNA polymerase subunit beta (1374 aa).

It belongs to the RNA polymerase beta chain family. As to quaternary structure, the RNAP catalytic core consists of 2 alpha, 1 beta, 1 beta' and 1 omega subunit. When a sigma factor is associated with the core the holoenzyme is formed, which can initiate transcription.

The catalysed reaction is RNA(n) + a ribonucleoside 5'-triphosphate = RNA(n+1) + diphosphate. Its function is as follows. DNA-dependent RNA polymerase catalyzes the transcription of DNA into RNA using the four ribonucleoside triphosphates as substrates. This is DNA-directed RNA polymerase subunit beta from Acidovorax sp. (strain JS42).